A 128-amino-acid polypeptide reads, in one-letter code: Small ribosomal subunit protein uS11 (128 aa).

This sequence belongs to the universal ribosomal protein uS11 family. In terms of assembly, part of the 30S ribosomal subunit. Interacts with proteins S7 and S18. Binds to IF-3.

In terms of biological role, located on the platform of the 30S subunit, it bridges several disparate RNA helices of the 16S rRNA. Forms part of the Shine-Dalgarno cleft in the 70S ribosome. The polypeptide is Small ribosomal subunit protein uS11 (Leuconostoc mesenteroides subsp. mesenteroides (strain ATCC 8293 / DSM 20343 / BCRC 11652 / CCM 1803 / JCM 6124 / NCDO 523 / NBRC 100496 / NCIMB 8023 / NCTC 12954 / NRRL B-1118 / 37Y)).